The sequence spans 200 residues: HTH-type transcriptional regulator Hpr (200 aa).

An HTH marR-type domain is found at 13-157 (AMLFSQRIAQ…MMCIVRNIYG (145 aa)). The H-T-H motif DNA-binding region spans 63-86 (ISEIAKFGVMHVSTAFNFSKKLEE).

Homodimer.

Its function is as follows. Negative regulator of protease production and sporulation. The sequence is that of HTH-type transcriptional regulator Hpr from Geobacillus thermodenitrificans (strain NG80-2).